The primary structure comprises 279 residues: MSTGLLDSWADAGDEFSAPPEVIANPDGTKTVITFRTNQDGKKVKITQKIKEVKVQEKVHPLIAQRKNWKKYGKEKNSPPGPDTSTTQLGEKVDLKLGTSWKQDEKKEEEDKAHERAQKIAVQTIKCRVCGGDHYTAKCPFKDTLGAAAGVTPSGTTPEPTSEGGAGAAGAGKYVPRHLRADANGNVPTREARDDSTTLKVSQLNSFVDEDMLRNELFAKFGPLQRVTIVRNRETGESRGFAYVSFATEEIAQRALDTFNGKGYHSLILHLEWSKKKKT.

3 disordered regions span residues 1-26, 66-115, and 152-171; these read MSTG…IANP, RKNW…KAHE, and TPSG…AAGA. Ser-78 bears the Phosphoserine mark. Positions 102–115 are enriched in basic and acidic residues; it reads KQDEKKEEEDKAHE. The span at 152–163 shows a compositional bias: low complexity; that stretch reads TPSGTTPEPTSE. The 80-residue stretch at 197-276 folds into the RRM domain; that stretch reads TTLKVSQLNS…LILHLEWSKK (80 aa).

Belongs to the eIF-3 subunit G family. Component of the eukaryotic translation initiation factor 3 (eIF-3) complex.

The protein localises to the cytoplasm. Functionally, RNA-binding component of the eukaryotic translation initiation factor 3 (eIF-3) complex, which is involved in protein synthesis of a specialized repertoire of mRNAs and, together with other initiation factors, stimulates binding of mRNA and methionyl-tRNAi to the 40S ribosome. The eIF-3 complex specifically targets and initiates translation of a subset of mRNAs involved in cell proliferation. This subunit can bind 18S rRNA. In Candida albicans (strain SC5314 / ATCC MYA-2876) (Yeast), this protein is Eukaryotic translation initiation factor 3 subunit G.